A 525-amino-acid chain; its full sequence is Ribonuclease Y (525 aa).

Residues 3–23 (IFFISLVLIVLASVVFFVGGF) form a helical membrane-spanning segment. In terms of domain architecture, KH spans 215–300 (ALSVVHIQSD…KAYEDAKKEI (86 aa)). In terms of domain architecture, HD spans 341–433 (LLQHSREVAM…VDAANVISLS (93 aa)).

It belongs to the RNase Y family.

The protein resides in the cell membrane. In terms of biological role, endoribonuclease that initiates mRNA decay. In Chlorobium phaeobacteroides (strain DSM 266 / SMG 266 / 2430), this protein is Ribonuclease Y.